A 433-amino-acid chain; its full sequence is Leucine-rich repeat extensin-like protein 7 (433 aa).

A signal peptide spans 1 to 21 (MRIYQPTLLIFTTVVLLSISA). Asn-71 carries an N-linked (GlcNAc...) asparagine glycan. LRR repeat units lie at residues 98 to 122 (VKTVSGVDLNQGDIAGHLPEELGLL), 123 to 145 (TDIALFHVNSNRFCGTLPVGFSQ), 146 to 170 (LSLLFELDLSNNRFAGKFPEVVIGL), 171 to 194 (PKLKYLDLRYNEFEGELPESLFDK), 196 to 217 (LDALFLNSNRFRSKIPVNMGNS), 219 to 239 (VSVLVLASNRFEGCIPPSFGK), 241 to 265 (GKTLNEIILMDNGLQSCIPNDMGLL), 266 to 289 (QNVTVLDISYNWLVGELPKSMGQM), and 290 to 313 (ENLEVLNVERNMLSGLIPDELCSL). The N-linked (GlcNAc...) asparagine glycan is linked to Asn-267. N-linked (GlcNAc...) asparagine glycosylation is present at Asn-340. The disordered stretch occupies residues 380–433 (FSPPPSQISPSSQPLAPAPSPTSPPLSTPPPARPCPPVYSPPPPPPLSLAPSMN). The interval 381-433 (SPPPSQISPSSQPLAPAPSPTSPPLSTPPPARPCPPVYSPPPPPPLSLAPSMN) is contains the Ser-Pro(4) repeats. Residues 395-427 (APAPSPTSPPLSTPPPARPCPPVYSPPPPPPLS) show a composition bias toward pro residues.

Hydroxylated on proline residues in the S-P-P-P-P repeat. Post-translationally, O-glycosylated on hydroxyprolines. As to expression, expressed in flowers and pollen.

It is found in the secreted. The protein resides in the cell wall. Functionally, modulates cell morphogenesis by regulating cell wall formation and assembly, and/or growth polarization. This is Leucine-rich repeat extensin-like protein 7 (LRX7) from Arabidopsis thaliana (Mouse-ear cress).